The primary structure comprises 218 residues: Mediator of RNA polymerase II transcription subunit 20 (218 aa).

It belongs to the Mediator complex subunit 20 family. As to quaternary structure, component of the Mediator complex.

The protein resides in the nucleus. In terms of biological role, component of the Mediator complex, a coactivator involved in the regulated transcription of nearly all RNA polymerase II-dependent genes. Mediator functions as a bridge to convey information from gene-specific regulatory proteins to the basal RNA polymerase II transcription machinery. Mediator is recruited to promoters by direct interactions with regulatory proteins and serves as a scaffold for the assembly of a functional preinitiation complex with RNA polymerase II and the general transcription factors. The polypeptide is Mediator of RNA polymerase II transcription subunit 20 (MED20) (Anopheles gambiae (African malaria mosquito)).